A 329-amino-acid chain; its full sequence is Transmembrane protein I329L (329 aa).

Residues 1 to 31 (MLRVFIFFVFLGSGLAGRIKPQITCKYFISE) form the signal peptide. N-linked (GlcNAc...) asparagine; by host glycans are attached at residues Asn-32, Asn-39, Asn-44, Asn-76, Asn-82, and Asn-101. The Extracellular segment spans residues 32–239 (NNTWYKYNVT…NTERYKNCYP (208 aa)). An LRR repeat occupies 112 to 133 (ELKFLDLRYNNLQFIDYNILRK). N-linked (GlcNAc...) asparagine; by host glycosylation is found at Asn-185 and Asn-219. An intrachain disulfide couples Cys-195 to Cys-237. The chain crosses the membrane as a helical span at residues 240–260 (FVLVSILCSCISFLFLIICLL). Topologically, residues 261–329 (RSICKKYSCT…EKKASCSRRK (69 aa)) are cytoplasmic.

The protein belongs to the asfivirus I329L family. In terms of processing, highly glycosylated.

It localises to the host endoplasmic reticulum membrane. Its subcellular location is the host Golgi apparatus membrane. Viral TLR3 homolog that probably prevents TLR3 dimerization and subsequent induction of IFN. Inhibits dsRNA-stimulated activation of NF-kB and IRF3. This chain is Transmembrane protein I329L, found in Ornithodoros (relapsing fever ticks).